Reading from the N-terminus, the 156-residue chain is Succinate dehydrogenase assembly factor 2-A, mitochondrial (156 aa).

Residues 1–24 (MLRQFLVSTAVRRVVVPSMAQTRC) constitute a mitochondrion transit peptide. Positions 35-62 (TPGEIVDYDDPPHIPVPEYPSRPDEPLE) are disordered.

The protein belongs to the SDHAF2 family. As to quaternary structure, interacts with the flavoprotein subunit within the SDH catalytic dimer.

The protein localises to the mitochondrion matrix. Plays an essential role in the assembly of succinate dehydrogenase (SDH), an enzyme complex (also referred to as respiratory complex II) that is a component of both the tricarboxylic acid (TCA) cycle and the mitochondrial electron transport chain, and which couples the oxidation of succinate to fumarate with the reduction of ubiquinone (coenzyme Q) to ubiquinol. Required for flavinylation (covalent attachment of FAD) of the flavoprotein subunit of the SDH catalytic dimer. This chain is Succinate dehydrogenase assembly factor 2-A, mitochondrial, found in Drosophila ananassae (Fruit fly).